The following is a 347-amino-acid chain: Dihydroorotase (347 aa).

Residues His17 and His19 each coordinate Zn(2+). Substrate-binding positions include 19–21 and Asn45; that span reads HLR. Zn(2+) is bound by residues Lys103, His140, and His178. An N6-carboxylysine modification is found at Lys103. His140 is a substrate binding site. Leu223 is a binding site for substrate. Position 251 (Asp251) interacts with Zn(2+). The active site involves Asp251. Residues His255 and Ala267 each contribute to the substrate site.

Belongs to the metallo-dependent hydrolases superfamily. DHOase family. Class II DHOase subfamily. In terms of assembly, homodimer. Zn(2+) serves as cofactor.

It carries out the reaction (S)-dihydroorotate + H2O = N-carbamoyl-L-aspartate + H(+). Its pathway is pyrimidine metabolism; UMP biosynthesis via de novo pathway; (S)-dihydroorotate from bicarbonate: step 3/3. Functionally, catalyzes the reversible cyclization of carbamoyl aspartate to dihydroorotate. In Citrobacter koseri (strain ATCC BAA-895 / CDC 4225-83 / SGSC4696), this protein is Dihydroorotase.